Consider the following 258-residue polypeptide: F-box/SPRY domain-containing protein 1 (258 aa).

Residues 6–54 enclose the F-box domain; sequence MEYAPNIPDNVLELIFSFLKLQDLRNCTLVCKSWYRFFCDENNEVWRAQ. A B30.2/SPRY domain is found at 64–256; sequence FKNDLLTVVP…ISMVYLGAPL (193 aa).

It belongs to the FBXO45/Fsn family. Component of an E3 ubiquitin ligase complex composed of hiw and Fsn.

Its subcellular location is the synapse. The protein operates within protein modification; protein ubiquitination. Functionally, required in the presynaptic motoneuron to down-regulate the levels of wnd and restrain synaptic terminal growth at the neuromuscular junction (NMJ). This Anopheles gambiae (African malaria mosquito) protein is F-box/SPRY domain-containing protein 1.